Reading from the N-terminus, the 293-residue chain is Acetyl-coenzyme A carboxylase carboxyl transferase subunit beta (293 aa).

The 265-residue stretch at 29–293 (LWRKCPRCEG…MGWPPLALDD (265 aa)) folds into the CoA carboxyltransferase N-terminal domain. 4 residues coordinate Zn(2+): Cys33, Cys36, Cys52, and Cys55. Residues 33–55 (CPRCEGVVYRPELDRNMDVCPKC) form a C4-type zinc finger.

It belongs to the AccD/PCCB family. Acetyl-CoA carboxylase is a heterohexamer composed of biotin carboxyl carrier protein (AccB), biotin carboxylase (AccC) and two subunits each of ACCase subunit alpha (AccA) and ACCase subunit beta (AccD). Zn(2+) serves as cofactor.

It is found in the cytoplasm. It catalyses the reaction N(6)-carboxybiotinyl-L-lysyl-[protein] + acetyl-CoA = N(6)-biotinyl-L-lysyl-[protein] + malonyl-CoA. It participates in lipid metabolism; malonyl-CoA biosynthesis; malonyl-CoA from acetyl-CoA: step 1/1. Its function is as follows. Component of the acetyl coenzyme A carboxylase (ACC) complex. Biotin carboxylase (BC) catalyzes the carboxylation of biotin on its carrier protein (BCCP) and then the CO(2) group is transferred by the transcarboxylase to acetyl-CoA to form malonyl-CoA. This chain is Acetyl-coenzyme A carboxylase carboxyl transferase subunit beta, found in Alcanivorax borkumensis (strain ATCC 700651 / DSM 11573 / NCIMB 13689 / SK2).